A 191-amino-acid chain; its full sequence is Putative 3-methyladenine DNA glycosylase (191 aa).

It belongs to the DNA glycosylase MPG family.

In Carboxydothermus hydrogenoformans (strain ATCC BAA-161 / DSM 6008 / Z-2901), this protein is Putative 3-methyladenine DNA glycosylase.